We begin with the raw amino-acid sequence, 987 residues long: Leucine--tRNA ligase (987 aa).

The short motif at 69 to 80 (PYPSGKGLHVGH) is the 'HIGH' region element. The 'KMSKS' region signature appears at 760–764 (KMGKS). An ATP-binding site is contributed by lysine 763.

This sequence belongs to the class-I aminoacyl-tRNA synthetase family.

It is found in the cytoplasm. The enzyme catalyses tRNA(Leu) + L-leucine + ATP = L-leucyl-tRNA(Leu) + AMP + diphosphate. In Bifidobacterium longum (strain DJO10A), this protein is Leucine--tRNA ligase.